The primary structure comprises 246 residues: Envelope glycoprotein L (246 aa).

An N-terminal signal peptide occupies residues 1-19 (MKTNIFFIFLISILNQIYA). The gL betaherpesvirus-type domain occupies 29–235 (LEQECIKNIL…EKYNEVLPFR (207 aa)). A disulfide bridge links cysteine 134 with cysteine 139.

It belongs to the herpesviridae glycoprotein L (gL) family. Betaherpesvirinae gL subfamily. Interacts with glycoprotein H (gH); this interaction is necessary for the correct processing and cell surface expression of gH.

It localises to the virion membrane. The protein localises to the host cell membrane. The protein resides in the host Golgi apparatus. Its subcellular location is the host trans-Golgi network. Its function is as follows. The heterodimer glycoprotein H-glycoprotein L is required for the fusion of viral and plasma membranes leading to virus entry into the host cell. Acts as a functional inhibitor of gH and maintains gH in an inhibited form. Upon binding to host integrins, gL dissociates from gH leading to activation of the viral fusion glycoproteins gB and gH. In Homo sapiens (Human), this protein is Envelope glycoprotein L.